Here is a 1219-residue protein sequence, read N- to C-terminus: ATP-dependent helicase/nuclease subunit A (1219 aa).

The region spanning 12-477 (TRWTDNQWKS…IDLSQNFRSR (466 aa)) is the UvrD-like helicase ATP-binding domain. 33–40 (AAAGSGKT) serves as a coordination point for ATP. In terms of domain architecture, UvrD-like helicase C-terminal spans 478–786 (EEVLTTTNYL…RMMTIHSSKG (309 aa)). Positions 997 to 1016 (PSKQSVSELKRQHETEQSDT) are disordered. Basic and acidic residues predominate over residues 1004–1016 (ELKRQHETEQSDT).

It belongs to the helicase family. AddA subfamily. In terms of assembly, heterodimer of AddA and AddB/RexB. Mg(2+) is required as a cofactor.

It catalyses the reaction Couples ATP hydrolysis with the unwinding of duplex DNA by translocating in the 3'-5' direction.. The enzyme catalyses ATP + H2O = ADP + phosphate + H(+). Its function is as follows. The heterodimer acts as both an ATP-dependent DNA helicase and an ATP-dependent, dual-direction single-stranded exonuclease. Recognizes the chi site generating a DNA molecule suitable for the initiation of homologous recombination. The AddA nuclease domain is required for chi fragment generation; this subunit has the helicase and 3' -&gt; 5' nuclease activities. This Staphylococcus saprophyticus subsp. saprophyticus (strain ATCC 15305 / DSM 20229 / NCIMB 8711 / NCTC 7292 / S-41) protein is ATP-dependent helicase/nuclease subunit A.